We begin with the raw amino-acid sequence, 369 residues long: Anhydro-N-acetylmuramic acid kinase (369 aa).

Position 12 to 19 (12 to 19 (GTSLDGVD)) interacts with ATP.

The protein belongs to the anhydro-N-acetylmuramic acid kinase family.

The enzyme catalyses 1,6-anhydro-N-acetyl-beta-muramate + ATP + H2O = N-acetyl-D-muramate 6-phosphate + ADP + H(+). It functions in the pathway amino-sugar metabolism; 1,6-anhydro-N-acetylmuramate degradation. It participates in cell wall biogenesis; peptidoglycan recycling. In terms of biological role, catalyzes the specific phosphorylation of 1,6-anhydro-N-acetylmuramic acid (anhMurNAc) with the simultaneous cleavage of the 1,6-anhydro ring, generating MurNAc-6-P. Is required for the utilization of anhMurNAc either imported from the medium or derived from its own cell wall murein, and thus plays a role in cell wall recycling. The chain is Anhydro-N-acetylmuramic acid kinase from Escherichia coli (strain K12 / MC4100 / BW2952).